Consider the following 325-residue polypeptide: MNMTKTAMLIALMTVMFMSIGYLLGGGGGMMIALVIAVAMNLFGYWNSDKMVLRMYNAQEVDERSAPEYYRMVSGLAANAGLPMPKVYIIHEDQPNAFATGRNPENAAVAATTGLLNRLSPEEVAGVMAHELAHVQNRDTLTMTIVATLAGAISMLGNFAFFLGGNRENGNGVMGVVGTLLAMIVAPFAAMIVQMAVSRTREYAADKRGAEICGNPLWLSSALGKIARGAKVIPNEEAEHNPATAHMFIINPLSGRGADNLFSTHPDTDNRIAALEQMAAEMGIRSAAMTARAAAPSQNSGPWGQRSDNAGGNSNGGSRYRGPWS.

Residues 20 to 40 (IGYLLGGGGGMMIALVIAVAM) traverse the membrane as a helical segment. His130 contacts Zn(2+). Residue Glu131 is part of the active site. His134 is a binding site for Zn(2+). The next 2 membrane-spanning stretches (helical) occupy residues 145–165 (IVAT…FLGG) and 173–193 (VMGV…AMIV). Glu202 provides a ligand contact to Zn(2+). Residues 288 to 325 (AMTARAAAPSQNSGPWGQRSDNAGGNSNGGSRYRGPWS) are disordered. Positions 306-325 (RSDNAGGNSNGGSRYRGPWS) are enriched in low complexity.

Belongs to the peptidase M48B family. Requires Zn(2+) as cofactor.

The protein resides in the cell inner membrane. The sequence is that of Protease HtpX homolog from Brucella suis (strain ATCC 23445 / NCTC 10510).